The sequence spans 250 residues: ATP synthase subunit a (250 aa).

The next 6 helical transmembrane spans lie at 26-46, 84-104, 114-134, 143-163, 193-213, and 216-236; these read FTNASLFMVATVGVAAGFLYL, FFPMVFSLFMFILTANLLGMF, IIVTFALAVFVIGTVILYGFY, LFVPHGVPGALLPLVVSIEVI, FVASLSAFGALGIGGAILPLI, and VALTGLEFLVAFLQAYVFAVL.

This sequence belongs to the ATPase A chain family. As to quaternary structure, F-type ATPases have 2 components, CF(1) - the catalytic core - and CF(0) - the membrane proton channel. CF(1) has five subunits: alpha(3), beta(3), gamma(1), delta(1), epsilon(1). CF(0) has three main subunits: a(1), b(2) and c(9-12). The alpha and beta chains form an alternating ring which encloses part of the gamma chain. CF(1) is attached to CF(0) by a central stalk formed by the gamma and epsilon chains, while a peripheral stalk is formed by the delta and b chains.

It localises to the cell inner membrane. In terms of biological role, key component of the proton channel; it plays a direct role in the translocation of protons across the membrane. This chain is ATP synthase subunit a, found in Sinorhizobium fredii (strain NBRC 101917 / NGR234).